The sequence spans 185 residues: Elongation factor P (185 aa).

This sequence belongs to the elongation factor P family.

It localises to the cytoplasm. It functions in the pathway protein biosynthesis; polypeptide chain elongation. Functionally, involved in peptide bond synthesis. Stimulates efficient translation and peptide-bond synthesis on native or reconstituted 70S ribosomes in vitro. Probably functions indirectly by altering the affinity of the ribosome for aminoacyl-tRNA, thus increasing their reactivity as acceptors for peptidyl transferase. The protein is Elongation factor P of Streptococcus equi subsp. zooepidemicus (strain MGCS10565).